Reading from the N-terminus, the 295-residue chain is Alpha-soluble NSF attachment protein (295 aa).

N-acetylmethionine is present on Met-1. A phosphoserine mark is found at Ser-26, Ser-29, and Ser-195.

It belongs to the SNAP family. In terms of assembly, interacts with PRKCABP, and disrupts the interaction between GRIA2 and PRKCABP, leading to the internalization of GRIA2. Found in a complex with VAMP8. Component of a SNARE-like complex that contains at least ZW10, USE1L, RINT1, STX18 and NAPA/SNAP-alpha. Interacts with VTI1A. Interacts with STX12. Interacts with GNA12 (via N-terminus); the interaction promotes CDH5 localization to plasma membrane.

Its subcellular location is the cell membrane. Required for vesicular transport between the endoplasmic reticulum and the Golgi apparatus. Together with GNA12 promotes CDH5 localization to plasma membrane. This Homo sapiens (Human) protein is Alpha-soluble NSF attachment protein (NAPA).